A 747-amino-acid chain; its full sequence is AMP deaminase 1 (747 aa).

Thr81 carries the phosphothreonine modification. The residue at position 85 (Ser85) is a Phosphoserine. Position 216 is a phosphotyrosine (Tyr216). Residues His303 and His305 each coordinate Zn(2+). Substrate-binding positions include His305 and 374 to 379; that span reads KFNDKY. Position 441 is a phosphoserine (Ser441). His572 lines the Zn(2+) pocket. A substrate-binding site is contributed by Glu575. The Proton acceptor role is filled by His594. Zn(2+) is bound at residue Asp649. 650–653 lines the substrate pocket; that stretch reads DPMQ.

This sequence belongs to the metallo-dependent hydrolases superfamily. Adenosine and AMP deaminases family. Homotetramer. The cofactor is Zn(2+).

The catalysed reaction is AMP + H2O + H(+) = IMP + NH4(+). It participates in purine metabolism; IMP biosynthesis via salvage pathway; IMP from AMP: step 1/1. In terms of biological role, AMP deaminase plays a critical role in energy metabolism. This Homo sapiens (Human) protein is AMP deaminase 1.